A 502-amino-acid chain; its full sequence is Maturase K (502 aa).

Belongs to the intron maturase 2 family. MatK subfamily.

It is found in the plastid. It localises to the chloroplast. Usually encoded in the trnK tRNA gene intron. Probably assists in splicing its own and other chloroplast group II introns. The protein is Maturase K of Fremontodendron californicum (California flannelbush).